Here is a 236-residue protein sequence, read N- to C-terminus: EP300-interacting inhibitor of differentiation 2 (236 aa).

A compositionally biased stretch (polar residues) spans 1–15 (MSQLPAVSSAPQTGA). Positions 1–102 (MSQLPAVSSA…REGPAAAAAS (102 aa)) are disordered. Low complexity-rich tracts occupy residues 32–68 (RALP…GRVA) and 75–102 (AAAA…AAAS). 2 positions are modified to omega-N-methylarginine: arginine 63 and arginine 79. Residues 170 to 190 (RIQELEERRRRFVEACRAREA) are a coiled coil.

As to quaternary structure, heterodimer with EID2B. Interacts with the C-terminus of EP300. Interacts with HDAC1 and HDAC2. Interacts with SMAD2, SMAD4 and with the MH2 domain of SMAD3. Expressed in heart, brain, kidney and pancreas. Not detected in placenta.

It localises to the nucleus. In terms of biological role, interacts with EP300 and acts as a repressor of MYOD-dependent transcription and muscle differentiation. Inhibits EP300 histone acetyltransferase activity. Acts as a repressor of TGFB/SMAD transcriptional responses. May act as a repressor of the TGFB/SMAD3-dependent signaling by selectively blocking formation of TGFB-induced SMAD3-SMAD4 complex. The chain is EP300-interacting inhibitor of differentiation 2 from Mus musculus (Mouse).